The following is a 578-amino-acid chain: Arginine--tRNA ligase (578 aa).

The 'HIGH' region motif lies at 125–135; it reads PNVAKKMHVGH.

Belongs to the class-I aminoacyl-tRNA synthetase family. In terms of assembly, monomer.

Its subcellular location is the cytoplasm. The enzyme catalyses tRNA(Arg) + L-arginine + ATP = L-arginyl-tRNA(Arg) + AMP + diphosphate. In Buchnera aphidicola subsp. Baizongia pistaciae (strain Bp), this protein is Arginine--tRNA ligase.